The primary structure comprises 306 residues: Phospho-N-acetylmuramoyl-pentapeptide-transferase (306 aa).

The next 10 helical transmembrane spans lie at 2 to 22, 47 to 67, 71 to 91, 105 to 125, 131 to 151, 162 to 182, 185 to 205, 209 to 229, 236 to 256, and 284 to 304; these read IALL…LKYW, SGTP…FLFF, FFIS…DLKL, IFLS…DYKI, LIID…IAVP, GLAG…SFHF, IALE…FNSH, IFMG…LSVV, LIFL…QVFF, and IVWR…VLWY.

It belongs to the glycosyltransferase 4 family. MraY subfamily. Requires Mg(2+) as cofactor.

Its subcellular location is the cell inner membrane. The enzyme catalyses UDP-N-acetyl-alpha-D-muramoyl-L-alanyl-gamma-D-glutamyl-meso-2,6-diaminopimeloyl-D-alanyl-D-alanine + di-trans,octa-cis-undecaprenyl phosphate = di-trans,octa-cis-undecaprenyl diphospho-N-acetyl-alpha-D-muramoyl-L-alanyl-D-glutamyl-meso-2,6-diaminopimeloyl-D-alanyl-D-alanine + UMP. It functions in the pathway cell wall biogenesis; peptidoglycan biosynthesis. Functionally, catalyzes the initial step of the lipid cycle reactions in the biosynthesis of the cell wall peptidoglycan: transfers peptidoglycan precursor phospho-MurNAc-pentapeptide from UDP-MurNAc-pentapeptide onto the lipid carrier undecaprenyl phosphate, yielding undecaprenyl-pyrophosphoryl-MurNAc-pentapeptide, known as lipid I. In Dictyoglomus thermophilum (strain ATCC 35947 / DSM 3960 / H-6-12), this protein is Phospho-N-acetylmuramoyl-pentapeptide-transferase.